The following is a 2446-amino-acid chain: Transcription factor HIVEP2 (2446 aa).

A disordered region spans residues 1–93 (MDTGDTALGQ…YPPHRPSPYS (93 aa)). Residues 17 to 28 (GETDKASGRWRQ) show a composition bias toward basic and acidic residues. C2H2-type zinc fingers lie at residues 189–211 (YICPYCSRACAKPSVLKKHIRSH) and 217–239 (YPCIPCGFSFKTKSNLYKHRKSH). 4 disordered regions span residues 272 to 303 (HSDGEQSTDTDEESSLFAEASDKMSPGPPIPL), 340 to 416 (ESSQ…PPNT), 543 to 563 (SNSVPTSSATNLTIPPSLRGS), and 751 to 985 (SHGH…SFER). Polar residues-rich tracts occupy residues 381 to 416 (SEPSLNLLSPHSKGSTDSGYFSRSESAEQQISPPNT) and 543 to 556 (SNSVPTSSATNLTI). Positions 751-760 (SHGHTERFDP) are enriched in basic and acidic residues. Residues 766-777 (QPGSPSLVSEES) show a composition bias toward polar residues. Basic and acidic residues predominate over residues 782-791 (DSDKMSDLGG). Residues 800–812 (SVIQHTNSLSRPN) show a composition bias toward polar residues. S819 bears the Phosphoserine mark. Residues 863–878 (PSPSQQVQQQSYHTQP) are compositionally biased toward low complexity. Basic and acidic residues predominate over residues 892 to 916 (RVTEEPDKPEKEKEAQSKEPEKPVE). A Nuclear localization signal motif is present at residues 937 to 943 (PKKKRLR). S950, S955, S1048, S1443, and S1447 each carry phosphoserine. Low complexity predominate over residues 952-982 (GESSFESTGTGLSRSPSQESNLSHSSSFSMS). The disordered stretch occupies residues 1485 to 1603 (KDLSRPQKPQ…LEEEGKGHKR (119 aa)). Low complexity-rich tracts occupy residues 1510–1533 (SGSSSFSSLSPSSSQDYPSVSPSS) and 1576–1586 (SDMSMSPQSSS). 2 consecutive C2H2-type zinc fingers follow at residues 1799 to 1821 (YICEECGIRCKKPSMLKKHIRTH) and 1827 to 1851 (YVCKLCNFAFKTKGNLTKHMKSKAH). Disordered stretches follow at residues 1882 to 1951 (AAEK…VNVG) and 2024 to 2129 (EECM…RRDL). Positions 1899-1925 (DAEESDGEDGDDNDDDDEDEDDFDDQG) are enriched in acidic residues. Over residues 2029-2053 (PSEPSSSPRDFSPSSHHSSPGYDSS) the composition is skewed to low complexity. 10 repeat units span residues 2053–2056 (SPCR), 2059–2062 (SPKR), 2071–2074 (SPRR), 2083–2086 (SPMR), 2089–2092 (SPRK), 2106–2109 (SPRR), 2112–2115 (SPRR), 2118–2121 (SPGK), 2130–2133 (SPRR), and 2145–2148 (SPRR). Residues 2053–2148 (SPCRDNSPKR…TTIRAPSPRR (96 aa)) form a 10 X 4 AA tandem repeats of S-P-[RGMKC]-[RK] region. The segment covering 2078 to 2107 (PRRDLSPMRHLSPRKEAALRREMSQRDVSP) has biased composition (basic and acidic residues). S2118 is subject to Phosphoserine. Disordered stretches follow at residues 2242–2325 (PALS…QEEN), 2371–2403 (HFSRPEPGQPCTSATHPDLHDGEKDNFGTSQTP), and 2423–2446 (HSSKELSSSTEESKDPSSEKSQLH). S2297 and S2301 each carry phosphoserine. Residues 2307–2317 (KQSTSEDSLNA) are compositionally biased toward polar residues. A compositionally biased stretch (basic and acidic residues) spans 2387-2396 (PDLHDGEKDN). A phosphoserine mark is found at S2429 and S2431. The span at 2433 to 2446 (EESKDPSSEKSQLH) shows a compositional bias: basic and acidic residues.

As to quaternary structure, interacts with TCF4. Expressed in brain and skeletal muscle.

It localises to the nucleus. In terms of biological role, this protein specifically binds to the DNA sequence 5'-GGGACTTTCC-3' which is found in the enhancer elements of numerous viral promoters such as those of SV40, CMV, or HIV1. In addition, related sequences are found in the enhancer elements of a number of cellular promoters, including those of the class I MHC, interleukin-2 receptor, somatostatin receptor II, and interferon-beta genes. It may act in T-cell activation. The chain is Transcription factor HIVEP2 (HIVEP2) from Homo sapiens (Human).